The chain runs to 140 residues: Cysteine desulfuration protein SufE (140 aa).

The active-site Cysteine persulfide intermediate is C51.

The protein belongs to the SufE family. In terms of assembly, homodimer. Interacts with SufS.

It localises to the cytoplasm. The protein operates within cofactor biosynthesis; iron-sulfur cluster biosynthesis. Participates in cysteine desulfuration mediated by SufS. Cysteine desulfuration mobilizes sulfur from L-cysteine to yield L-alanine and constitutes an essential step in sulfur metabolism for biosynthesis of a variety of sulfur-containing biomolecules. Functions as a sulfur acceptor for SufS, by mediating the direct transfer of the sulfur atom from the S-sulfanylcysteine of SufS, an intermediate product of cysteine desulfuration process. The chain is Cysteine desulfuration protein SufE from Yersinia pestis bv. Antiqua (strain Antiqua).